Here is an 87-residue protein sequence, read N- to C-terminus: Small ribosomal subunit protein uS17 (87 aa).

It belongs to the universal ribosomal protein uS17 family. In terms of assembly, part of the 30S ribosomal subunit.

In terms of biological role, one of the primary rRNA binding proteins, it binds specifically to the 5'-end of 16S ribosomal RNA. The polypeptide is Small ribosomal subunit protein uS17 (Thioalkalivibrio sulfidiphilus (strain HL-EbGR7)).